We begin with the raw amino-acid sequence, 184 residues long: uncharacterized protein (184 aa).

This is an uncharacterized protein from Methanocaldococcus jannaschii (strain ATCC 43067 / DSM 2661 / JAL-1 / JCM 10045 / NBRC 100440) (Methanococcus jannaschii).